Consider the following 451-residue polypeptide: ESX secretion system protein YukC (451 aa).

Residues 221-241 traverse the membrane as a helical segment; sequence IGLGLIVLLVPALIYSMYALF. Positions 362–447 form a coiled coil; the sequence is DEDIQKELDS…KKETEKKDEK (86 aa). Residues 376–386 show a composition bias toward basic and acidic residues; that stretch reads LEKAQKERQEN. The disordered stretch occupies residues 376–451; that stretch reads LEKAQKERQE…EKKDEKKDDK (76 aa). Positions 387 to 397 are enriched in polar residues; it reads KQSNSETSLVD. Over residues 406-451 the composition is skewed to basic and acidic residues; that stretch reads DEEKQAEEKAAEEKAAAEEKAKKEEQKEKEDEKKETEKKDEKKDDK.

Belongs to the EssB family.

The protein localises to the cell membrane. Required for YukE secretion. Probable component or regulator of the ESX/ESAT-6-like secretion system (BsEss). Required to deliver LXG toxins to target cells. This Bacillus subtilis (strain 168) protein is ESX secretion system protein YukC (yukC).